A 61-amino-acid polypeptide reads, in one-letter code: Large ribosomal subunit protein bL32 (61 aa).

Belongs to the bacterial ribosomal protein bL32 family.

This chain is Large ribosomal subunit protein bL32, found in Phytoplasma mali (strain AT).